Here is an 853-residue protein sequence, read N- to C-terminus: Envelope glycoprotein gp160 (853 aa).

The N-terminal stretch at 1–31 (MRVKEIRKNWQHLRGGILLLGMLMICSAAKE) is a signal peptide. The Extracellular segment spans residues 32 to 681 (KTWVTIYYGV…ITNWLWYIRL (650 aa)). C53 and C73 form a disulfide bridge. Residues N87, N129, N134, N138, N157, N189, N199, N232, N236, N243, N264, N278, N291, N297, N303, N333, N340, N356, and N362 are each glycosylated (N-linked (GlcNAc...) asparagine; by host). 5 disulfides stabilise this stretch: C118-C207, C125-C198, C130-C158, C220-C249, and C230-C241. Positions 130 to 157 (CTNLNITKNTTNPTSSSWGMMEKGEIKN) are V1. The V2 stretch occupies residues 158 to 198 (CSFYITTSIRNKVKKEYALFNRLDVVPIENTNNTKYRLISC). A V3 region spans residues 298-331 (CTRPNNNTRRRLSIGPGRAFYARRNIIGDIRQAH). C298 and C332 form a disulfide bridge. Residues 364-374 (SSGGDPEIVMH) are CD4-binding loop. 2 cysteine pairs are disulfide-bonded: C378–C441 and C385–C414. The tract at residues 385–414 (CNTAQLFNSTWNVTGGTNGTEGNDIITLQC) is V4. N-linked (GlcNAc...) asparagine; by host glycosylation is found at N392, N396, N402, N444, and N456. The tract at residues 459–468 (ETETEIFRPG) is V5. Residues 509 to 529 (AVGIGAVFLGFLGAAGSTMGA) are fusion peptide. The segment at 571-589 (KQLQARVLALERYLRDQQL) is immunosuppression. The cysteines at positions 595 and 601 are disulfide-linked. N608, N613, N622, and N634 each carry an N-linked (GlcNAc...) asparagine; by host glycan. Residues 630–664 (REIDNYTDYIYDLLEKSQTQQEKNEKELLELDKWA) adopt a coiled-coil conformation. Residues 659 to 680 (ELDKWASLWNWFDITNWLWYIR) are MPER; binding to GalCer. Residues 682–702 (FIMIVGGLIGLRIVFAVLSIV) form a helical membrane-spanning segment. Residues 703 to 853 (NRVRQGYSPL…IRQGLERALL (151 aa)) are Cytoplasmic-facing. The YXXL motif; contains endocytosis signal signature appears at 709 to 712 (YSPL). Residues 718-740 (LPASRGPDRPEGTEEEGGERDRD) form a disordered region. Residues C761 and C834 are each lipidated (S-palmitoyl cysteine; by host). A Di-leucine internalization motif motif is present at residues 852 to 853 (LL).

It belongs to the HIV-1 env protein family. The mature envelope protein (Env) consists of a homotrimer of non-covalently associated gp120-gp41 heterodimers. The resulting complex protrudes from the virus surface as a spike. There seems to be as few as 10 spikes on the average virion. Interacts with host CD4, CCR5 and CXCR4. Gp120 also interacts with the C-type lectins CD209/DC-SIGN and CLEC4M/DC-SIGNR (collectively referred to as DC-SIGN(R)). Gp120 and gp41 interact with GalCer. Gp120 interacts with host ITGA4/ITGB7 complex; on CD4+ T-cells, this interaction results in rapid activation of integrin ITGAL/LFA-1, which facilitates efficient cell-to-cell spreading of HIV-1. Gp120 interacts with cell-associated heparan sulfate; this interaction increases virus infectivity on permissive cells and may be involved in infection of CD4- cells. As to quaternary structure, the mature envelope protein (Env) consists of a homotrimer of non-covalently associated gp120-gp41 heterodimers. The resulting complex protrudes from the virus surface as a spike. There seems to be as few as 10 spikes on the average virion. Highly glycosylated by host. The high number of glycan on the protein is reffered to as 'glycan shield' because it contributes to hide protein sequence from adaptive immune system. In terms of processing, palmitoylation of the transmembrane protein and of Env polyprotein (prior to its proteolytic cleavage) is essential for their association with host cell membrane lipid rafts. Palmitoylation is therefore required for envelope trafficking to classical lipid rafts, but not for viral replication. Post-translationally, specific enzymatic cleavages in vivo yield mature proteins. Envelope glycoproteins are synthesized as an inactive precursor that is heavily N-glycosylated and processed likely by host cell furin in the Golgi to yield the mature SU and TM proteins. The cleavage site between SU and TM requires the minimal sequence [KR]-X-[KR]-R. About 2 of the 9 disulfide bonds of gp41 are reduced by P4HB/PDI, following binding to CD4 receptor.

It localises to the virion membrane. Its subcellular location is the host cell membrane. The protein resides in the host endosome membrane. Oligomerizes in the host endoplasmic reticulum into predominantly trimers. In a second time, gp160 transits in the host Golgi, where glycosylation is completed. The precursor is then proteolytically cleaved in the trans-Golgi and thereby activated by cellular furin or furin-like proteases to produce gp120 and gp41. Its function is as follows. Attaches the virus to the host lymphoid cell by binding to the primary receptor CD4. This interaction induces a structural rearrangement creating a high affinity binding site for a chemokine coreceptor like CXCR4 and/or CCR5. Acts as a ligand for CD209/DC-SIGN and CLEC4M/DC-SIGNR, which are respectively found on dendritic cells (DCs), and on endothelial cells of liver sinusoids and lymph node sinuses. These interactions allow capture of viral particles at mucosal surfaces by these cells and subsequent transmission to permissive cells. HIV subverts the migration properties of dendritic cells to gain access to CD4+ T-cells in lymph nodes. Virus transmission to permissive T-cells occurs either in trans (without DCs infection, through viral capture and transmission), or in cis (following DCs productive infection, through the usual CD4-gp120 interaction), thereby inducing a robust infection. In trans infection, bound virions remain infectious over days and it is proposed that they are not degraded, but protected in non-lysosomal acidic organelles within the DCs close to the cell membrane thus contributing to the viral infectious potential during DCs' migration from the periphery to the lymphoid tissues. On arrival at lymphoid tissues, intact virions recycle back to DCs' cell surface allowing virus transmission to CD4+ T-cells. In terms of biological role, acts as a class I viral fusion protein. Under the current model, the protein has at least 3 conformational states: pre-fusion native state, pre-hairpin intermediate state, and post-fusion hairpin state. During fusion of viral and target intracellular membranes, the coiled coil regions (heptad repeats) assume a trimer-of-hairpins structure, positioning the fusion peptide in close proximity to the C-terminal region of the ectodomain. The formation of this structure appears to drive apposition and subsequent fusion of viral and target cell membranes. Complete fusion occurs in host cell endosomes and is dynamin-dependent, however some lipid transfer might occur at the plasma membrane. The virus undergoes clathrin-dependent internalization long before endosomal fusion, thus minimizing the surface exposure of conserved viral epitopes during fusion and reducing the efficacy of inhibitors targeting these epitopes. Membranes fusion leads to delivery of the nucleocapsid into the cytoplasm. The chain is Envelope glycoprotein gp160 from Human immunodeficiency virus type 1 group M subtype B (strain 89.6) (HIV-1).